The chain runs to 207 residues: Carbonic anhydrase 2 (207 aa).

The Zn(2+) site is built by Cys-51, Asp-53, His-104, and Cys-107.

Belongs to the beta-class carbonic anhydrase family. It depends on Zn(2+) as a cofactor.

The catalysed reaction is hydrogencarbonate + H(+) = CO2 + H2O. Functionally, catalyzes the reversible hydration of carbon dioxide to form bicarbonate. The chain is Carbonic anhydrase 2 (mtcA2) from Mycobacterium tuberculosis (strain CDC 1551 / Oshkosh).